Here is a 253-residue protein sequence, read N- to C-terminus: Sulfate transporter CysZ (253 aa).

4 helical membrane-spanning segments follow: residues 31 to 51 (FVIL…WWLF), 72 to 92 (LSYL…GYFF), 151 to 171 (IVLL…PVLW), and 222 to 242 (IPVL…AMWV).

The protein belongs to the CysZ family.

The protein localises to the cell inner membrane. Its function is as follows. High affinity, high specificity proton-dependent sulfate transporter, which mediates sulfate uptake. Provides the sulfur source for the cysteine synthesis pathway. The chain is Sulfate transporter CysZ from Salmonella paratyphi A (strain AKU_12601).